A 326-amino-acid chain; its full sequence is dTDP-4-dehydro-6-deoxy-D-allose reductase (326 aa).

NADP(+)-binding positions include glycine 15 to glycine 21 and methionine 129 to serine 132. The active-site Proton donor/acceptor is the tyrosine 160. Residues lysine 164 and proline 187–valine 190 each bind NADP(+).

Belongs to the NAD(P)-dependent epimerase/dehydratase family.

The enzyme catalyses dTDP-6-deoxy-alpha-D-allose + NAD(+) = dTDP-4-dehydro-6-deoxy-alpha-D-allose + NADH + H(+). It catalyses the reaction dTDP-6-deoxy-alpha-D-allose + NADP(+) = dTDP-4-dehydro-6-deoxy-alpha-D-allose + NADPH + H(+). In terms of biological role, catalyzes the stereospecific reduction of the C-4 keto group of dTDP-4-dehydro-6-deoxy-D-allose, leading to dTDP-6-deoxy-D-allose, an intermediate in the biosynthesis of the mycinose moiety of the chalcomycin antibiotic. This chain is dTDP-4-dehydro-6-deoxy-D-allose reductase (chmD), found in Streptomyces bikiniensis.